Here is a 118-residue protein sequence, read N- to C-terminus: Fluoride-specific ion channel FluC 1 (118 aa).

Helical transmembrane passes span 1 to 21 and 29 to 49; these read MIQCILVMLGGGIGAVIRGFV and FNTSLPIPTLLINVVGSFCIG. Positions 71 and 74 each coordinate Na(+). The helical transmembrane segment at 95–115 threads the bilayer; it reads LFILYSILQYGVSFVACLLGY.

This sequence belongs to the fluoride channel Fluc/FEX (TC 1.A.43) family.

It is found in the cell membrane. The catalysed reaction is fluoride(in) = fluoride(out). Na(+) is not transported, but it plays an essential structural role and its presence is essential for fluoride channel function. In terms of biological role, fluoride-specific ion channel. Important for reducing fluoride concentration in the cell, thus reducing its toxicity. This chain is Fluoride-specific ion channel FluC 1, found in Staphylococcus saprophyticus subsp. saprophyticus (strain ATCC 15305 / DSM 20229 / NCIMB 8711 / NCTC 7292 / S-41).